A 185-amino-acid polypeptide reads, in one-letter code: Adenine phosphoribosyltransferase (185 aa).

The protein belongs to the purine/pyrimidine phosphoribosyltransferase family. In terms of assembly, homodimer.

It is found in the cytoplasm. The catalysed reaction is AMP + diphosphate = 5-phospho-alpha-D-ribose 1-diphosphate + adenine. It functions in the pathway purine metabolism; AMP biosynthesis via salvage pathway; AMP from adenine: step 1/1. Catalyzes a salvage reaction resulting in the formation of AMP, that is energically less costly than de novo synthesis. The sequence is that of Adenine phosphoribosyltransferase from Pectobacterium atrosepticum (strain SCRI 1043 / ATCC BAA-672) (Erwinia carotovora subsp. atroseptica).